A 1193-amino-acid polypeptide reads, in one-letter code: Tubulin monoglutamylase TTLL4 (1193 aa).

2 disordered regions span residues methionine 1–serine 37 and valine 468–leucine 535. Positions proline 24–glutamate 34 are enriched in polar residues. Basic and acidic residues predominate over residues glutamine 472–aspartate 482. Acidic residues predominate over residues glutamate 502–glutamate 515. In terms of domain architecture, TTL spans arginine 599–serine 942. Residue serine 686 is modified to Phosphoserine. Residues lysine 716, arginine 722–glycine 723, glutamine 744–leucine 747, and lysine 757–aspartate 759 each bind ATP. Arginine 722 contributes to the a protein binding site. Arginine 783 contacts L-glutamate. Threonine 804 to asparagine 805 lines the ATP pocket. L-glutamate-binding residues include tyrosine 806, serine 807, and lysine 828. The Mg(2+) site is built by aspartate 888, glutamate 901, and asparagine 903. The tract at residues proline 913–serine 1027 is c-MTBD region. L-glutamate is bound at residue lysine 919. The segment covering serine 943–serine 960 has biased composition (low complexity). Disordered stretches follow at residues serine 943–glutamine 966 and methionine 1092–serine 1193. 2 stretches are compositionally biased toward polar residues: residues methionine 1092–asparagine 1102 and serine 1131–lysine 1153. Over residues serine 1168–serine 1182 the composition is skewed to low complexity. The span at valine 1183–serine 1193 shows a compositional bias: polar residues.

Belongs to the tubulin--tyrosine ligase family. It depends on Mg(2+) as a cofactor. Highly expressed in testis. Expressed in brain, heart, kidney, liver, lung, muscle and spleen. In the brain, expressed in ependymal cilia, the cortex and the striatum. Expressed in blastomere.

It is found in the cytoplasm. The protein resides in the cell projection. Its subcellular location is the cilium. It localises to the cytoskeleton. The protein localises to the cilium basal body. The enzyme catalyses L-glutamyl-[protein] + L-glutamate + ATP = gamma-L-glutamyl-L-glutamyl-[protein] + ADP + phosphate + H(+). Its function is as follows. Monoglutamylase which modifies both tubulin and non-tubulin proteins, adding a single glutamate on the gamma-carboxyl group of specific glutamate residues of target proteins. Involved in the side-chain initiation step of the polyglutamylation reaction but not in the elongation step. Preferentially modifies beta-tail tubulin over the alpha-tubulin. Monoglutamylates nucleosome assembly proteins NAP1L1 and NAP1L4. Monoglutamylates nucleotidyltransferase CGAS, leading to inhibition of CGAS catalytic activity, thereby preventing antiviral defense function. Involved in KLF4 glutamylation which impedes its ubiquitination, thereby leading to somatic cell reprogramming, pluripotency maintenance and embryogenesis. The sequence is that of Tubulin monoglutamylase TTLL4 from Mus musculus (Mouse).